The following is a 409-amino-acid chain: Elongation factor Tu, chloroplastic (409 aa).

Positions 10 to 214 (KPHINIGTIG…AVDAYIPTPE (205 aa)) constitute a tr-type G domain. Residues 19–26 (GHVDHGKT) are G1. Position 19–26 (19–26 (GHVDHGKT)) interacts with GTP. Residue threonine 26 coordinates Mg(2+). A G2 region spans residues 60 to 64 (GITIN). The segment at 81–84 (DCPG) is G3. GTP contacts are provided by residues 81–85 (DCPGH) and 136–139 (NKQD). The interval 136-139 (NKQD) is G4. The G5 stretch occupies residues 174 to 176 (SRL).

Belongs to the TRAFAC class translation factor GTPase superfamily. Classic translation factor GTPase family. EF-Tu/EF-1A subfamily.

The protein localises to the plastid. Its subcellular location is the chloroplast. It carries out the reaction GTP + H2O = GDP + phosphate + H(+). Its function is as follows. GTP hydrolase that promotes the GTP-dependent binding of aminoacyl-tRNA to the A-site of ribosomes during protein biosynthesis. In Stephanocyclus meneghinianus (Diatom), this protein is Elongation factor Tu, chloroplastic (tufA).